The chain runs to 984 residues: Pro-apoptotic serine protease NMA111 (984 aa).

Residues 51 to 241 form a serine protease region; that stretch reads VVSIQFAQVA…LPLNRGKRAL (191 aa). Catalysis depends on charge relay system residues His89, Asp120, and Ser203. PDZ domains are found at residues 268–346 and 756–826; these read RRLG…ERNG and PEWI…VRNK.

This sequence belongs to the peptidase S1C family.

It is found in the nucleus. Nuclear serine protease which mediates apoptosis. The chain is Pro-apoptotic serine protease NMA111 (NMA111) from Yarrowia lipolytica (strain CLIB 122 / E 150) (Yeast).